A 445-amino-acid polypeptide reads, in one-letter code: tRNA modification GTPase MnmE (445 aa).

Positions 20, 79, and 119 each coordinate (6S)-5-formyl-5,6,7,8-tetrahydrofolate. The region spanning 215–371 (GLKLAIIGPP…ILKNIEEIAE (157 aa)) is the TrmE-type G domain. A K(+)-binding site is contributed by asparagine 225. Residues 225 to 230 (NAGKSS), 244 to 250 (SNIAGTT), and 269 to 272 (DTAG) each bind GTP. Serine 229 contacts Mg(2+). Serine 244, isoleucine 246, and threonine 249 together coordinate K(+). Residue threonine 250 participates in Mg(2+) binding. Lysine 445 lines the (6S)-5-formyl-5,6,7,8-tetrahydrofolate pocket.

Belongs to the TRAFAC class TrmE-Era-EngA-EngB-Septin-like GTPase superfamily. TrmE GTPase family. As to quaternary structure, homodimer. Heterotetramer of two MnmE and two MnmG subunits. K(+) serves as cofactor.

The protein localises to the cytoplasm. Exhibits a very high intrinsic GTPase hydrolysis rate. Involved in the addition of a carboxymethylaminomethyl (cmnm) group at the wobble position (U34) of certain tRNAs, forming tRNA-cmnm(5)s(2)U34. The chain is tRNA modification GTPase MnmE from Rickettsia bellii (strain RML369-C).